We begin with the raw amino-acid sequence, 1319 residues long: Chitin-binding domain protein cbd-1 (1319 aa).

The first 19 residues, 1–19, serve as a signal peptide directing secretion; that stretch reads MGPQLATVSLLLLTFFSNS. 3 Chitin-binding type-2 domains span residues 28–83, 96–141, and 190–236; these read ATEC…ECRV, EFDC…TQDC, and DFDC…QSCD. Cystine bridges form between cysteine 61–cysteine 72, cysteine 128–cysteine 141, and cysteine 222–cysteine 235. The segment at 250–271 is disordered; it reads YSTSTITTPQEDDSEYSSTTSA. In terms of domain architecture, Chitin-binding type-2 4 spans 304 to 357; the sequence is PFVCQEGQVNSFGMCSSRFNRCQNNSVRSKQCPVNTLFESSLVMCVFDLPQCQP. Asparagine 327 carries N-linked (GlcNAc...) asparagine glycosylation. Cysteine 335 and cysteine 348 form a disulfide bridge. The segment at 504–524 is disordered; it reads KNRHSKKQLGPHEDPDGYDDE. The segment covering 513-524 has biased composition (basic and acidic residues); the sequence is GPHEDPDGYDDE. Residues 566–614 form the Chitin-binding type-2 5 domain; the sequence is NKDCQQYTTPTFLTFGDCFDQFIFCSGNGINRMAACPIGETFDKTLRSC. Cysteine 601 and cysteine 614 form a disulfide bridge. Positions 649 to 682 are disordered; sequence VTTQSTWNDQPSTTQAPNSYESYTTQYSSNDVPS. 3 consecutive Chitin-binding type-2 domains span residues 689-745, 782-838, and 883-942; these read GDRC…ECGS, GDRC…KCQT, and VDTC…ACDE. Residues cysteine 721 and cysteine 734 are joined by a disulfide bond. Residues 742–764 form a disordered region; the sequence is ECGSQGSTSSPVITTPGQDQSSN. Residues 745–764 show a composition bias toward polar residues; it reads SQGSTSSPVITTPGQDQSSN. Cystine bridges form between cysteine 814–cysteine 827 and cysteine 916–cysteine 929. A compositionally biased stretch (polar residues) spans 984-995; it reads TGSTKYSTTDSG. The disordered stretch occupies residues 984–1031; the sequence is TGSTKYSTTDSGEYTIPYGDETTSTRSYDRADNDSEDEEEDDVEHDQK. An N-linked (GlcNAc...) asparagine glycan is attached at asparagine 1016. The span at 1017–1027 shows a compositional bias: acidic residues; sequence DSEDEEEDDVE. Chitin-binding type-2 domains lie at 1029-1081, 1105-1163, 1179-1237, and 1242-1298; these read DQKC…GCGK, EGRC…ACTV, SAFC…GCEN, and NGEC…SCSG. Intrachain disulfides connect cysteine 1060-cysteine 1073, cysteine 1139-cysteine 1152, cysteine 1213-cysteine 1226, and cysteine 1274-cysteine 1287. Low complexity predominate over residues 1297–1312; that stretch reads SGQASDSNSSYGSSTY. Residues 1297–1319 are disordered; that stretch reads SGQASDSNSSYGSSTYNDDKSGY. An N-linked (GlcNAc...) asparagine glycan is attached at asparagine 1304.

It is found in the secreted. The protein localises to the extracellular space. Its subcellular location is the extracellular matrix. Its function is as follows. In unfertilized oocytes, maintains egg-1 and egg-2 at the plasma membrane together with chitin synthase chs-1 and kinase mbk-2. Essential for the formation of a continuous and cohesive chitin layer following fertilization. The protein is Chitin-binding domain protein cbd-1 of Caenorhabditis elegans.